The chain runs to 84 residues: Small ribosomal subunit protein uS17 (84 aa).

This sequence belongs to the universal ribosomal protein uS17 family. As to quaternary structure, part of the 30S ribosomal subunit.

Its function is as follows. One of the primary rRNA binding proteins, it binds specifically to the 5'-end of 16S ribosomal RNA. This is Small ribosomal subunit protein uS17 from Aliivibrio fischeri (strain ATCC 700601 / ES114) (Vibrio fischeri).